Consider the following 116-residue polypeptide: MAFSFLNKLLIIFIFIFISLSSSSPTISLVQQLSPEIAPLLPSPGDALPSDDGSGTIPSSPSPPDPDTNDGSYPDPLAFSPFASPPVSSPSPPPSLPSAGVLLISLIISSASFLAL.

An N-terminal signal peptide occupies residues 1–28 (MAFSFLNKLLIIFIFIFISLSSSSPTIS). The disordered stretch occupies residues 40 to 95 (LLPSPGDALPSDDGSGTIPSSPSPPDPDTNDGSYPDPLAFSPFASPPVSSPSPPPS). Low complexity-rich tracts occupy residues 50 to 59 (SDDGSGTIPS) and 69 to 82 (NDGSYPDPLAFSPF). Pro residues predominate over residues 83 to 95 (ASPPVSSPSPPPS). A lipid anchor (GPI-anchor amidated serine) is attached at serine 89. Positions 90–116 (PSPPPSLPSAGVLLISLIISSASFLAL) are cleaved as a propeptide — removed in mature form.

This sequence belongs to the classical AGP family. Post-translationally, O-glycosylated on the hydroxyproline residues.

Its subcellular location is the cell membrane. Its function is as follows. Proteoglycan that seems to be implicated in diverse developmental roles such as differentiation, cell-cell recognition, embryogenesis and programmed cell death. The polypeptide is Classical arabinogalactan protein 25 (AGP25) (Arabidopsis thaliana (Mouse-ear cress)).